Here is a 500-residue protein sequence, read N- to C-terminus: Probable transcription factor FPSE_09189 (500 aa).

2 disordered regions span residues 161-197 (MVRHLSNHPPSGTVPVGPCSRPEPSRASQRPEPPSLA) and 457-500 (IRTG…TQLE). Residues 459–474 (TGHEDSSRDGGRENKA) show a composition bias toward basic and acidic residues. The segment covering 475-484 (MNRNRSTGNS) has biased composition (polar residues).

Its subcellular location is the nucleus. Functionally, the two putative transcription factors FPSE_09188 and FPSE_09189 could be responsible for orchestrating expression of the W493 A and B biosynthesis cluster genes. W493 A and B consist of six amino acid residues D-allo-thr, L-Ala, D-Ala, L-Gln, D-Tyr, and L-Val/L-Ile linked to a 3-hydroxy-4-methyltetradecanoic acid polyketide chain. In Fusarium pseudograminearum (strain CS3096) (Wheat and barley crown-rot fungus), this protein is Probable transcription factor FPSE_09189.